Here is an 84-residue protein sequence, read N- to C-terminus: Control protein C.SmaI (84 aa).

Residues 19-73 (VRSYRNINNLSQEQLAEISGLHRTYIGSVERKERNVTLSTLIILAKALNTSVPKL) form the HTH cro/C1-type domain. The H-T-H motif DNA-binding region spans 30 to 49 (QEQLAEISGLHRTYIGSVER).

May control expression of its associated restriction-modification system SmaI. The protein is Control protein C.SmaI of Serratia marcescens.